A 1250-amino-acid chain; its full sequence is MDTDYESTYEDDSQVPNDDVVPYSDDETDDELDSPQTDEPEQNRRNVQAEQSREPVIKECTWQVKANDRNFYDQPEFKKKVFLCLKKSKYAGNAIKTYKYNPITFLPVNLYEQFKRAANAYFLVLLILQTIPQISTVTWSTTLIPLLLVLGITAIKDLVDDIARHKMDNEINNRPSEVITDGRFKKTKWKHIHVGDIIRINKNEFVPADVLLLSSSDPNSLCYVETAELDGETNLKFKMSLEITDKLLQKEEQLAGFDGLVECEEPNNRLDKFVGTLFWRGNSFGLDADKILLRGCTVRNTEYCHGLVLFAGADTKIMRNSGKTRLKRTKIDYLMNYMVYTIFVLLILAAAGLAIGQTFWEAKLGAANVSWYLYDGNNYSPSYRGFLAFWGYIIVLNTMVPISLYVSVEVIRLGQSYFINWDLQMYFSPKDTPAKARTTTLNEQLGQIQYIFSDKTGTLTQNIMTFKKCTINGTTYGDDDDELKSGQTKQVDFSWNPLADPSFTFHDNYLIEQIRAGKDKDVYEFFKLLALCHTVMAEKTDGELIYQAASPDEGALVTAARNFGFVFLSRTQSTITISELGQEKTYEVLAILDFNSDRKRMSIIVRQPDGRIRLYCKGADTVIYERLHPDNPIKDQTQKALDIFANASLRTLCLCYKDINKGDFENWSKKYKQASVATSNRDEALDRVYEAIETDLKLLGATAIEDKLQDDVSGTIFNLARADIKIWVLTGDKKETAENIGYSCKLLDDDTEILYGEDINVHLQTRMENQRNQMSGNQGAQSNQSGAFLPTDKKHALIITGSWLNEILLEKKKRKKKRLKLKFPRTKEEKEQQLHEKLKAYALKEQRQRSFVDLACECSAVICCRVTPKQKAMVVDLVKRYKKAVTLAIGDGANDVNMIKTAHIGVGISGQEGMQAVMSSDYSFAQFRYLQRLLLVHGRWSYIRMCKFLRYFFYKNFSFTLVHFWYSFFNGFSAQTVYEDWFITLYNVLYSSLPVLLVGLLDQDVSDKLSLAFPRLYVPGQKDLLFNYKKFFLSLFHGIVTSLIIFFIPYGAFLLTMGQDGEAPSDYQSFAVTTATALVITVNFQIGLDTSYWTFVNAFSIFGSIAIYFGIMFDLHSAGIHVLFPSMFIFTGAAPNALRQPYLWLTIILTVAFCLLPIVALRFLAKTIWPSESDKIQKKGKKFKAEVEQRAKPKPFARGVSTRRSAYAFSHQRGYADLISSGRSIRKKRASLDAVFDNYPAQITHFTPQT.

2 stretches are compositionally biased toward acidic residues: residues 1 to 13 (MDTDYESTYEDDS) and 24 to 40 (SDDETDDELDSPQTDEP). The tract at residues 1–52 (MDTDYESTYEDDSQVPNDDVVPYSDDETDDELDSPQTDEPEQNRRNVQAEQS) is disordered. Residues 1 to 133 (MDTDYESTYE…VLLILQTIPQ (133 aa)) lie on the Cytoplasmic side of the membrane. A helical transmembrane segment spans residues 134–154 (ISTVTWSTTLIPLLLVLGITA). At 155 to 338 (IKDLVDDIAR…TKIDYLMNYM (184 aa)) the chain is on the exoplasmic loop side. The chain crosses the membrane as a helical span at residues 339–359 (VYTIFVLLILAAAGLAIGQTF). At 360–385 (WEAKLGAANVSWYLYDGNNYSPSYRG) the chain is on the cytoplasmic side. The chain crosses the membrane as a helical span at residues 386–406 (FLAFWGYIIVLNTMVPISLYV). The Exoplasmic loop segment spans residues 407 to 956 (SVEVIRLGQS…KFLRYFFYKN (550 aa)). Asp-454 (4-aspartylphosphate intermediate) is an active-site residue. 12 residues coordinate ATP: Asp-454, Lys-455, Thr-456, Glu-553, Phe-594, Lys-617, Arg-650, Thr-730, Gly-731, Asp-732, Arg-865, and Lys-871. Asp-454 provides a ligand contact to Mg(2+). Thr-456 lines the Mg(2+) pocket. Mg(2+) is bound at residue Asp-891. 2 residues coordinate ATP: Asn-894 and Asp-895. Asp-895 is a Mg(2+) binding site. A helical membrane pass occupies residues 957-977 (FSFTLVHFWYSFFNGFSAQTV). Residues 978-980 (YED) lie on the Cytoplasmic side of the membrane. A helical membrane pass occupies residues 981 to 1001 (WFITLYNVLYSSLPVLLVGLL). The Exoplasmic loop segment spans residues 1002-1034 (DQDVSDKLSLAFPRLYVPGQKDLLFNYKKFFLS). The helical transmembrane segment at 1035 to 1055 (LFHGIVTSLIIFFIPYGAFLL) threads the bilayer. The Cytoplasmic portion of the chain corresponds to 1056 to 1069 (TMGQDGEAPSDYQS). The helical transmembrane segment at 1070 to 1090 (FAVTTATALVITVNFQIGLDT) threads the bilayer. Residues 1091-1092 (SY) lie on the Exoplasmic loop side of the membrane. A helical membrane pass occupies residues 1093–1113 (WTFVNAFSIFGSIAIYFGIMF). Topologically, residues 1114 to 1117 (DLHS) are cytoplasmic. Residues 1118-1138 (AGIHVLFPSMFIFTGAAPNAL) form a helical membrane-spanning segment. Residues 1139 to 1140 (RQ) are Exoplasmic loop-facing. A helical membrane pass occupies residues 1141–1161 (PYLWLTIILTVAFCLLPIVAL). Topologically, residues 1162–1250 (RFLAKTIWPS…AQITHFTPQT (89 aa)) are cytoplasmic.

It belongs to the cation transport ATPase (P-type) (TC 3.A.3) family. Type IV subfamily. In terms of assembly, component of a P4-ATPase flippase complex which consists of a catalytic alpha subunit and an accessory beta subunit. The flippase ATP8B1:TMEM30A complex can form an intermediate phosphoenzyme in vitro. Also interacts with beta subunit TMEM30B. Mg(2+) is required as a cofactor.

It is found in the cell membrane. The protein localises to the apical cell membrane. The protein resides in the cell projection. It localises to the stereocilium. Its subcellular location is the endoplasmic reticulum. It is found in the golgi apparatus. It catalyses the reaction ATP + H2O + phospholipidSide 1 = ADP + phosphate + phospholipidSide 2.. The enzyme catalyses a 1,2-diacyl-sn-glycero-3-phospho-L-serine(out) + ATP + H2O = a 1,2-diacyl-sn-glycero-3-phospho-L-serine(in) + ADP + phosphate + H(+). Functionally, catalytic component of a P4-ATPase flippase complex which catalyzes the hydrolysis of ATP coupled to the transport of aminophospholipids from the outer to the inner leaflet of various membranes and ensures the maintenance of asymmetric distribution of phospholipids. Phospholipid translocation also seems to be implicated in vesicle formation and in uptake of lipid signaling molecules. May also participate in the establishment of the canalicular membrane integrity by ensuring asymmetric distribution of phospholipids in the canicular membrane. The protein is Phospholipid-transporting ATPase IC (atp8b1) of Xenopus tropicalis (Western clawed frog).